A 567-amino-acid chain; its full sequence is Urease subunit alpha (567 aa).

In terms of domain architecture, Urease spans Gly-129–Phe-567. Ni(2+) is bound by residues His-134, His-136, and Lys-217. N6-carboxylysine is present on Lys-217. His-219 is a binding site for substrate. His-246 and His-272 together coordinate Ni(2+). His-320 acts as the Proton donor in catalysis. Asp-360 lines the Ni(2+) pocket.

This sequence belongs to the metallo-dependent hydrolases superfamily. Urease alpha subunit family. In terms of assembly, heterotrimer of UreA (gamma), UreB (beta) and UreC (alpha) subunits. Three heterotrimers associate to form the active enzyme. It depends on Ni cation as a cofactor. Post-translationally, carboxylation allows a single lysine to coordinate two nickel ions.

It is found in the cytoplasm. It carries out the reaction urea + 2 H2O + H(+) = hydrogencarbonate + 2 NH4(+). Its pathway is nitrogen metabolism; urea degradation; CO(2) and NH(3) from urea (urease route): step 1/1. The sequence is that of Urease subunit alpha from Pseudomonas putida (strain ATCC 700007 / DSM 6899 / JCM 31910 / BCRC 17059 / LMG 24140 / F1).